Here is a 600-residue protein sequence, read N- to C-terminus: NADH-quinone oxidoreductase subunit C/D (600 aa).

The interval 1-190 (MIDLMPKKNT…EPFFLNEQKE (190 aa)) is NADH dehydrogenase I subunit C. Residues 214-600 (EFMFLNLGPN…IDFVMSDVDR (387 aa)) form an NADH dehydrogenase I subunit D region.

The protein in the N-terminal section; belongs to the complex I 30 kDa subunit family. This sequence in the C-terminal section; belongs to the complex I 49 kDa subunit family. As to quaternary structure, NDH-1 is composed of 13 different subunits. Subunits NuoB, CD, E, F, and G constitute the peripheral sector of the complex.

Its subcellular location is the cell inner membrane. It carries out the reaction a quinone + NADH + 5 H(+)(in) = a quinol + NAD(+) + 4 H(+)(out). NDH-1 shuttles electrons from NADH, via FMN and iron-sulfur (Fe-S) centers, to quinones in the respiratory chain. The immediate electron acceptor for the enzyme in this species is believed to be ubiquinone. Couples the redox reaction to proton translocation (for every two electrons transferred, four hydrogen ions are translocated across the cytoplasmic membrane), and thus conserves the redox energy in a proton gradient. This is NADH-quinone oxidoreductase subunit C/D from Buchnera aphidicola subsp. Acyrthosiphon pisum (strain APS) (Acyrthosiphon pisum symbiotic bacterium).